Here is a 404-residue protein sequence, read N- to C-terminus: Cytochrome P450 monooxygenase avaI (404 aa).

Heme is bound at residue cysteine 382.

Belongs to the cytochrome P450 family. Heme is required as a cofactor.

Its pathway is secondary metabolite biosynthesis. In terms of biological role, cytochrome P450 monooxygenase; part of the cluster that mediates the biosynthesis of a highly modified cyclo-arginine-tryptophan dipeptide (cRW). The first step of the pathway is perfornmed by the arginine-containing cyclodipeptide synthase (RCPDS) avaA that acts as the scaffold-generating enzyme and is responsible for formation of the cyclo-Arg-Trp (cRW) diketopiperazine. AvaB then acts as a multifunctional flavoenzyme that is responsible for generating the cyclo-Arg-formylkynurenine DKP, which can be deformylated by avaC. AvaB then further catalyzes an additional N-oxidation followed by cyclization and dehydration. The next step is an N-acetylation of the guanidine group catalyzed by the arginine N-acetyltransferase avaD. The roles of the additional enzymes identified within the ava cluster still have to be determined. This chain is Cytochrome P450 monooxygenase avaI, found in Aspergillus versicolor.